The primary structure comprises 475 residues: Probable phenylalanine--tRNA ligase alpha subunit (475 aa).

The contains the major tRNA-Phe binding sites stretch occupies residues 2-151; the sequence is TAVAQKIIEN…KRKLVSRRKK (150 aa). L-phenylalanine-binding positions include threonine 309, 351–353, and tyrosine 391; that span reads QVE. Glutamate 393 lines the Mg(2+) pocket. Phenylalanine 417 lines the L-phenylalanine pocket.

The protein belongs to the class-II aminoacyl-tRNA synthetase family. Phe-tRNA synthetase alpha subunit type 2 subfamily. In terms of assembly, tetramer of two alpha and two beta subunits. The cofactor is Mg(2+).

It is found in the cytoplasm. It catalyses the reaction tRNA(Phe) + L-phenylalanine + ATP = L-phenylalanyl-tRNA(Phe) + AMP + diphosphate + H(+). This Encephalitozoon cuniculi (strain GB-M1) (Microsporidian parasite) protein is Probable phenylalanine--tRNA ligase alpha subunit.